A 78-amino-acid chain; its full sequence is MASLIQVRDLLALRGRMEATQISHTLHAPQPMIDAMLNQLEIMGKAVRIPEEADGCLSGSCKSCPEGKACLREWWALR.

Iron-sulfur cluster is bound by residues Cys56, Cys61, Cys64, and Cys70.

The protein belongs to the FeoC family.

In terms of biological role, may function as a transcriptional regulator that controls feoABC expression. The protein is Probable [Fe-S]-dependent transcriptional repressor of Salmonella agona (strain SL483).